A 562-amino-acid polypeptide reads, in one-letter code: Glucan 1,3-beta-glucosidase 2 (562 aa).

The signal sequence occupies residues 1–22 (MPLKSFFFSAFLVLCLSKFTQG). N-linked (GlcNAc...) asparagine glycosylation is found at N50, N77, N86, N90, N106, N157, and N220. Catalysis depends on E254, which acts as the Proton donor. 5 N-linked (GlcNAc...) asparagine glycosylation sites follow: N281, N285, N310, N317, and N322. Residue H334 is the Nucleophile of the active site. N-linked (GlcNAc...) asparagine glycans are attached at residues N401, N480, and N539.

Belongs to the glycosyl hydrolase 5 (cellulase A) family.

Its subcellular location is the cell membrane. The enzyme catalyses Successive hydrolysis of beta-D-glucose units from the non-reducing ends of (1-&gt;3)-beta-D-glucans, releasing alpha-glucose.. The polypeptide is Glucan 1,3-beta-glucosidase 2 (EXG2) (Saccharomyces cerevisiae (strain ATCC 204508 / S288c) (Baker's yeast)).